The chain runs to 32 residues: Protamine S4 (32 aa).

Positions 1–32 are disordered; sequence GCKKRKARKRPKCKKARKRPKCKRRKVAKKKC.

As to expression, testis.

Its subcellular location is the nucleus. It localises to the chromosome. Protamines substitute for histones in the chromatin of sperm during the haploid phase of spermatogenesis. They compact sperm DNA into a highly condensed, stable and inactive complex. In Scyliorhinus canicula (Small-spotted catshark), this protein is Protamine S4.